Consider the following 1700-residue polypeptide: Leucine-rich repeat-containing protein 37A2 (1700 aa).

The N-terminal stretch at 1-35 is a signal peptide; that stretch reads MSSAQCPALVCVMSRLRFWGPWPLLMWQLLWLLVK. At 36-1582 the chain is on the extracellular side; it reads EAQPLEWVKD…VPGYGYTDKL (1547 aa). The segment covering 54 to 65 has biased composition (polar residues); the sequence is LGPPDSWSSHSS. Disordered regions lie at residues 54–104, 130–156, 169–534, 559–580, 619–642, and 729–752; these read LGPP…ESTE, QQDLKDKLSPQERLPVSPKKLKKDPAQ, QLST…AQPP, TEVELSPTMKETPTQPPKKVVP, PEPTTEVGHSTPPKRTIVSPKHPE, and TKPTTEVKPSPTTEETSTQPPDLG. The stretch at 137 to 160 is one LRR 1 repeat; the sequence is LSPQERLPVSPKKLKKDPAQRWSL. Polar residues-rich tracts occupy residues 169-189 and 223-237; these read QLSTPQSQKQTLQNEYSSTDT and ETQNPETLEDIQSSS. 2 LRR repeats span residues 230–253 and 267–290; these read LEDIQSSSLQQEAPAQLPQLLEEE and ESSMESLTLPNHEVSVQPPGEDQA. Residues 238–249 show a composition bias toward low complexity; it reads LQQEAPAQLPQL. Asn296 is a glycosylation site (N-linked (GlcNAc...) asparagine). Over residues 307-326 the composition is skewed to polar residues; sequence TITSEPTNETESSQAQQETP. Low complexity predominate over residues 358 to 368; that stretch reads SEQQQPVQPSE. Positions 433–446 are enriched in polar residues; that stretch reads LVHQEATTRLSGSG. Residues 482–493 are compositionally biased toward low complexity; sequence SPEPINNENPSP. A compositionally biased stretch (low complexity) spans 729–749; it reads TKPTTEVKPSPTTEETSTQPP. 6 LRR repeats span residues 864-887, 888-911, 912-935, 937-959, 963-987, and 1002-1027; these read NGTFTILNFQGNYISYIDGNVWKA, YSWTEKLILRENNLTELHKDSFEG, LLSLQYLDLSCNKIQSIERHTFEP, PFLKFINLSCNVITELSFGTFQA, MQFLHKLILNHNPLTTVEDPYLFKL, and LTTLKNILMMTVELEKLILPSHMACC. N-linked (GlcNAc...) asparagine glycosylation occurs at Asn1079. Residues 1124–1146 form an LRR 10 repeat; it reads LPYFSAVNLDVKSLLLPFIKLPT. 2 stretches are compositionally biased toward basic and acidic residues: residues 1182–1191 and 1201–1216; these read VGRQSIRREQ and AEEKRLGSPAPREVEQ. 2 disordered regions span residues 1182-1227 and 1309-1328; these read VGRQ…EKLA and KTRSHVTHRTPKVKKSPKVR. A helical membrane pass occupies residues 1583–1603; it reads ILALIVTGILTILIILFCLIV. Over 1604 to 1700 the chain is Cytoplasmic; it reads ICCHRRSLQE…TEEEESEALP (97 aa). Residues 1675–1685 are compositionally biased toward basic and acidic residues; that stretch reads NEDKILNRDPG. Residues 1675–1700 are disordered; that stretch reads NEDKILNRDPGDSEAPTEEEESEALP. Positions 1689 to 1700 are enriched in acidic residues; it reads APTEEEESEALP.

It belongs to the LRRC37A family.

The protein resides in the membrane. This Homo sapiens (Human) protein is Leucine-rich repeat-containing protein 37A2 (LRRC37A2).